A 176-amino-acid chain; its full sequence is Nucleoside triphosphate/diphosphate phosphatase (176 aa).

R23 (proton donor) is an active-site residue. The Mg(2+) site is built by N87, D103, D105, D107, D120, and E123.

This sequence belongs to the Ntdp family. Mg(2+) is required as a cofactor.

The catalysed reaction is a ribonucleoside 5'-triphosphate + H2O = a ribonucleoside 5'-diphosphate + phosphate + H(+). The enzyme catalyses a ribonucleoside 5'-diphosphate + H2O = a ribonucleoside 5'-phosphate + phosphate + H(+). In terms of biological role, has nucleoside phosphatase activity towards nucleoside triphosphates and nucleoside diphosphates. In Bacillus anthracis (strain A0248), this protein is Nucleoside triphosphate/diphosphate phosphatase.